Here is a 125-residue protein sequence, read N- to C-terminus: Fluoride-specific ion channel FluC (125 aa).

4 helical membrane passes run 6–26 (GFIALAGAAGTLARYWLSGLV), 34–54 (FPWGTAVVNILGCFLFGLVWE), 68–88 (AVLLTGFMGAFTTFSTFIFES), and 98–118 (LALLANLGFQTILGFAALFAG). 2 residues coordinate Na(+): glycine 76 and threonine 79.

It belongs to the fluoride channel Fluc/FEX (TC 1.A.43) family.

The protein localises to the cell inner membrane. The enzyme catalyses fluoride(in) = fluoride(out). With respect to regulation, na(+) is not transported, but it plays an essential structural role and its presence is essential for fluoride channel function. Fluoride-specific ion channel. Important for reducing fluoride concentration in the cell, thus reducing its toxicity. This is Fluoride-specific ion channel FluC from Solidesulfovibrio magneticus (strain ATCC 700980 / DSM 13731 / RS-1) (Desulfovibrio magneticus).